A 497-amino-acid polypeptide reads, in one-letter code: Glycerol kinase (497 aa).

ADP is bound at residue Thr11. ATP contacts are provided by Thr11, Ser12, and Ser13. Position 11 (Thr11) interacts with sn-glycerol 3-phosphate. Arg15 is a binding site for ADP. Residues Arg81, Glu82, Tyr133, and Asp242 each contribute to the sn-glycerol 3-phosphate site. Residues Arg81, Glu82, Tyr133, Asp242, and Gln243 each coordinate glycerol. Positions 264 and 307 each coordinate ADP. ATP-binding residues include Thr264, Gly307, Gln311, and Gly412. 2 residues coordinate ADP: Gly412 and Asn416.

Belongs to the FGGY kinase family.

It catalyses the reaction glycerol + ATP = sn-glycerol 3-phosphate + ADP + H(+). It participates in polyol metabolism; glycerol degradation via glycerol kinase pathway; sn-glycerol 3-phosphate from glycerol: step 1/1. With respect to regulation, inhibited by fructose 1,6-bisphosphate (FBP). Functionally, key enzyme in the regulation of glycerol uptake and metabolism. Catalyzes the phosphorylation of glycerol to yield sn-glycerol 3-phosphate. In Polaromonas naphthalenivorans (strain CJ2), this protein is Glycerol kinase.